Reading from the N-terminus, the 160-residue chain is Endoribonuclease YbeY (160 aa).

The Zn(2+) site is built by histidine 123, histidine 127, and histidine 133.

It belongs to the endoribonuclease YbeY family. Zn(2+) is required as a cofactor.

The protein localises to the cytoplasm. Functionally, single strand-specific metallo-endoribonuclease involved in late-stage 70S ribosome quality control and in maturation of the 3' terminus of the 16S rRNA. This Roseiflexus sp. (strain RS-1) protein is Endoribonuclease YbeY.